Consider the following 461-residue polypeptide: tRNA-splicing endonuclease subunit Sen2 (461 aa).

2 disordered regions span residues 140-176 and 190-210; these read GAEQ…TSSP and GDPA…DVKE. The segment covering 144-176 has biased composition (polar residues); the sequence is TGDSCDTVCPNTENTELSGQSSTDTGNIATSSP. The segment covering 201–210 has biased composition (basic and acidic residues); that stretch reads KEQEPADVKE. Residues Tyr365, His373, and Lys412 contribute to the active site.

It belongs to the tRNA-intron endonuclease family. As to quaternary structure, tRNA splicing endonuclease is a heterotetramer composed of SEN2, SEN15, SEN34/LENG5 and SEN54.

The protein resides in the nucleus. It catalyses the reaction pretRNA = a 3'-half-tRNA molecule with a 5'-OH end + a 5'-half-tRNA molecule with a 2',3'-cyclic phosphate end + an intron with a 2',3'-cyclic phosphate and a 5'-hydroxyl terminus.. In terms of biological role, constitutes one of the two catalytic subunit of the tRNA-splicing endonuclease complex, a complex responsible for identification and cleavage of the splice sites in pre-tRNA. It cleaves pre-tRNA at the 5'- and 3'-splice sites to release the intron. The products are an intron and two tRNA half-molecules bearing 2',3'-cyclic phosphate and 5'-OH termini. There are no conserved sequences at the splice sites, but the intron is invariably located at the same site in the gene, placing the splice sites an invariant distance from the constant structural features of the tRNA body. Probably carries the active site for 5'-splice site cleavage. The tRNA splicing endonuclease is also involved in mRNA processing via its association with pre-mRNA 3'-end processing factors, establishing a link between pre-tRNA splicing and pre-mRNA 3'-end formation, suggesting that the endonuclease subunits function in multiple RNA-processing events. The protein is tRNA-splicing endonuclease subunit Sen2 (TSEN2) of Gallus gallus (Chicken).